The primary structure comprises 375 residues: Ornithine carbamoyltransferase, chloroplastic (375 aa).

Carbamoyl phosphate-binding positions include 123–126, Arg-174, His-201, and Gln-204; that span reads SMRT. Positions 232, 293, 297, and 298 each coordinate L-ornithine. The active-site Proton acceptor is the Cys-333. Carbamoyl phosphate-binding positions include 333 to 334 and Arg-361; that span reads CL.

Belongs to the aspartate/ornithine carbamoyltransferase superfamily. OTCase family. Homotrimer.

The protein resides in the plastid. It localises to the chloroplast. It catalyses the reaction carbamoyl phosphate + L-ornithine = L-citrulline + phosphate + H(+). This is Ornithine carbamoyltransferase, chloroplastic (ARGF) from Pisum sativum (Garden pea).